Here is a 369-residue protein sequence, read N- to C-terminus: 1-aminocyclopropane-1-carboxylate oxidase homolog 3 (369 aa).

The Fe2OG dioxygenase domain maps to 217–318 (KGLLMLSHYY…VSVACFFTTG (102 aa)). 3 residues coordinate Fe cation: H241, D243, and H297.

It belongs to the iron/ascorbate-dependent oxidoreductase family. Fe cation serves as cofactor.

The protein is 1-aminocyclopropane-1-carboxylate oxidase homolog 3 of Arabidopsis thaliana (Mouse-ear cress).